The following is a 316-amino-acid chain: Transaldolase A (316 aa).

Catalysis depends on Lys-131, which acts as the Schiff-base intermediate with substrate.

This sequence belongs to the transaldolase family. Type 1 subfamily. As to quaternary structure, homodimer.

Its subcellular location is the cytoplasm. It carries out the reaction D-sedoheptulose 7-phosphate + D-glyceraldehyde 3-phosphate = D-erythrose 4-phosphate + beta-D-fructose 6-phosphate. It participates in carbohydrate degradation; pentose phosphate pathway; D-glyceraldehyde 3-phosphate and beta-D-fructose 6-phosphate from D-ribose 5-phosphate and D-xylulose 5-phosphate (non-oxidative stage): step 2/3. Its function is as follows. Transaldolase is important for the balance of metabolites in the pentose-phosphate pathway. The polypeptide is Transaldolase A (talA) (Escherichia coli O157:H7).